A 352-amino-acid polypeptide reads, in one-letter code: MSDSPVTLPESIKLTEYSHGAGCGCKISPKVLSTILASQLPVFTDPNLLVGNQSRDDAAVYKLNDDIGIISTTDFFMPIVDDPFTFGRIAATNAISDIYAMGGTPIMAIAILGWPINKLPAEVAQQVVDGGRQACMEAGIMLAGGHSIDAPEPIFGLAVTGQIALTDLKQNDTAKAGDRLYLTKPIGIGILTTAQKQKKLQDEDSHIAVNAMCQLNTIGTTIAKISGVNALTDVTGFGLAGHLLEMCQGAKLTAKLKFDAVPLLPRALDYLALGCVPGGTHRNYDSYGEHLPELSEHQKAILCDPQTSGGLLVAVSAEAEAELIDLLDAHHIAPICIGSLETPTTEVNVVLC.

Cysteine 23 is a catalytic residue. Residues lysine 26 and 54-56 (SRD) contribute to the ATP site. A Mg(2+)-binding site is contributed by aspartate 57. ATP contacts are provided by residues aspartate 74, aspartate 97, and 145-147 (GHS). Mg(2+) is bound at residue aspartate 97. Aspartate 233 is a Mg(2+) binding site.

The protein belongs to the selenophosphate synthase 1 family. Class I subfamily. Homodimer. Mg(2+) is required as a cofactor.

The enzyme catalyses hydrogenselenide + ATP + H2O = selenophosphate + AMP + phosphate + 2 H(+). Synthesizes selenophosphate from selenide and ATP. The sequence is that of Selenide, water dikinase from Shewanella baltica (strain OS155 / ATCC BAA-1091).